We begin with the raw amino-acid sequence, 209 residues long: Imidazoleglycerol-phosphate dehydratase (209 aa).

A disordered region spans residues 1-23; the sequence is MQLSDRPLTAPGTAPRQATVSRR.

Belongs to the imidazoleglycerol-phosphate dehydratase family.

Its subcellular location is the cytoplasm. It catalyses the reaction D-erythro-1-(imidazol-4-yl)glycerol 3-phosphate = 3-(imidazol-4-yl)-2-oxopropyl phosphate + H2O. The protein operates within amino-acid biosynthesis; L-histidine biosynthesis; L-histidine from 5-phospho-alpha-D-ribose 1-diphosphate: step 6/9. This Synechococcus elongatus (strain ATCC 33912 / PCC 7942 / FACHB-805) (Anacystis nidulans R2) protein is Imidazoleglycerol-phosphate dehydratase.